We begin with the raw amino-acid sequence, 99 residues long: Large ribosomal subunit protein uL23 (99 aa).

As to quaternary structure, contacts protein L29, and trigger factor when it is bound to the ribosome. Part of the 50S ribosomal subunit.

Its function is as follows. One of the early assembly proteins it binds 23S rRNA. One of the proteins that surrounds the polypeptide exit tunnel on the outside of the ribosome. Forms the main docking site for trigger factor binding to the ribosome. The polypeptide is Large ribosomal subunit protein uL23 (Rhodopseudomonas palustris (strain ATCC BAA-98 / CGA009)).